Here is a 550-residue protein sequence, read N- to C-terminus: Putative golgin subfamily A member 6-like protein 19 (550 aa).

The segment covering 1-11 (MWPQPRLPPHP) has biased composition (pro residues). The interval 1 to 77 (MWPQPRLPPH…DSATGVYGEG (77 aa)) is disordered. The span at 51 to 62 (NGSSPDTATSGG) shows a compositional bias: polar residues. Residues 157–405 (SKVEQLQDET…QERLRQQDER (249 aa)) adopt a coiled-coil conformation. Basic and acidic residues predominate over residues 467-480 (KELEKSGGAEEPRG). The interval 467–529 (KELEKSGGAE…VGTGEAAGGA (63 aa)) is disordered. Composition is skewed to low complexity over residues 484–499 (AAAARPVPGAPVPQGA) and 517–529 (GEAVGTGEAAGGA).

It belongs to the GOLGA6 family.

The protein is Putative golgin subfamily A member 6-like protein 19 (GOLGA6L19) of Homo sapiens (Human).